The chain runs to 485 residues: Glutamyl-tRNA(Gln) amidotransferase subunit A (485 aa).

Catalysis depends on charge relay system residues Lys78 and Ser153. Ser177 acts as the Acyl-ester intermediate in catalysis.

This sequence belongs to the amidase family. GatA subfamily. In terms of assembly, heterotrimer of A, B and C subunits.

The enzyme catalyses L-glutamyl-tRNA(Gln) + L-glutamine + ATP + H2O = L-glutaminyl-tRNA(Gln) + L-glutamate + ADP + phosphate + H(+). Its function is as follows. Allows the formation of correctly charged Gln-tRNA(Gln) through the transamidation of misacylated Glu-tRNA(Gln) in organisms which lack glutaminyl-tRNA synthetase. The reaction takes place in the presence of glutamine and ATP through an activated gamma-phospho-Glu-tRNA(Gln). This Pelobacter propionicus (strain DSM 2379 / NBRC 103807 / OttBd1) protein is Glutamyl-tRNA(Gln) amidotransferase subunit A.